The primary structure comprises 287 residues: Bifunctional protein FolD (287 aa).

NADP(+) is bound by residues 168-170 (GRS), serine 193, and isoleucine 234.

Belongs to the tetrahydrofolate dehydrogenase/cyclohydrolase family. Homodimer.

It carries out the reaction (6R)-5,10-methylene-5,6,7,8-tetrahydrofolate + NADP(+) = (6R)-5,10-methenyltetrahydrofolate + NADPH. The catalysed reaction is (6R)-5,10-methenyltetrahydrofolate + H2O = (6R)-10-formyltetrahydrofolate + H(+). It functions in the pathway one-carbon metabolism; tetrahydrofolate interconversion. Catalyzes the oxidation of 5,10-methylenetetrahydrofolate to 5,10-methenyltetrahydrofolate and then the hydrolysis of 5,10-methenyltetrahydrofolate to 10-formyltetrahydrofolate. The protein is Bifunctional protein FolD of Clostridioides difficile (strain 630) (Peptoclostridium difficile).